Here is a 703-residue protein sequence, read N- to C-terminus: Arf-GAP with GTPase, ANK repeat and PH domain-containing protein 9 (703 aa).

3 disordered regions span residues 249 to 287, 299 to 323, and 427 to 449; these read KRNGGGSLNNYSSSIPPTPSTSQEDPQFSVPPTANTPTP, FTSEKGSDPDKERKAPENHADTIGS, and SSTTSPKLNPPPSPHANKKKHLK. Positions 271–286 are enriched in polar residues; it reads QEDPQFSVPPTANTPT. Basic and acidic residues predominate over residues 303–318; sequence KGSDPDKERKAPENHA. Residues 327–488 form the PH domain; that stretch reads IPIKQGMLLK…WVQAIQSQIL (162 aa). One can recognise an Arf-GAP domain in the interval 509-629; the sequence is AMALQSIQNM…LFLAPLPCTE (121 aa). A C4-type zinc finger spans residues 524 to 547; that stretch reads CVDCETQNPKWASLNLGVLMCIEC. The stretch at 631–700 is one ANK repeat; sequence SLGQQLLRAT…WTSWPEMPTG (70 aa).

This sequence belongs to the centaurin gamma-like family.

Putative GTPase-activating protein. The chain is Arf-GAP with GTPase, ANK repeat and PH domain-containing protein 9 (AGAP9) from Homo sapiens (Human).